The primary structure comprises 407 residues: Serine hydroxymethyltransferase (407 aa).

Pyridoxal 5'-phosphate-binding positions include Tyr-51 and 94-95; that span reads GS. Residues Leu-117 and 121–123 contribute to the (6S)-5,6,7,8-tetrahydrofolate site; that span reads GHL. The pyridoxal 5'-phosphate site is built by Ser-172, His-200, and His-225. Lys-226 is subject to N6-(pyridoxal phosphate)lysine. Residue Glu-242 coordinates (6S)-5,6,7,8-tetrahydrofolate. Position 258 (Gly-258) interacts with pyridoxal 5'-phosphate.

Belongs to the SHMT family. In terms of assembly, homodimer. The cofactor is pyridoxal 5'-phosphate.

Its subcellular location is the cytoplasm. The catalysed reaction is (6R)-5,10-methylene-5,6,7,8-tetrahydrofolate + glycine + H2O = (6S)-5,6,7,8-tetrahydrofolate + L-serine. The protein operates within one-carbon metabolism; tetrahydrofolate interconversion. It functions in the pathway amino-acid biosynthesis; glycine biosynthesis; glycine from L-serine: step 1/1. Its function is as follows. Catalyzes the reversible interconversion of serine and glycine with tetrahydrofolate (THF) serving as the one-carbon carrier. This reaction serves as the major source of one-carbon groups required for the biosynthesis of purines, thymidylate, methionine, and other important biomolecules. Also exhibits THF-independent aldolase activity toward beta-hydroxyamino acids, producing glycine and aldehydes, via a retro-aldol mechanism. The chain is Serine hydroxymethyltransferase from Thermus thermophilus (strain ATCC 27634 / DSM 579 / HB8).